The following is a 117-amino-acid chain: Small ribosomal subunit protein uS8c (117 aa).

This sequence belongs to the universal ribosomal protein uS8 family. Part of the 30S ribosomal subunit.

It is found in the plastid. Its subcellular location is the chloroplast. Functionally, one of the primary rRNA binding proteins, it binds directly to 16S rRNA central domain where it helps coordinate assembly of the platform of the 30S subunit. This chain is Small ribosomal subunit protein uS8c (rps8), found in Cyanidioschyzon merolae (strain NIES-3377 / 10D) (Unicellular red alga).